The sequence spans 421 residues: D-amino acid dehydrogenase (421 aa).

FAD is bound at residue 3–17 (VIVLGSGVIGVASAY).

The protein belongs to the DadA oxidoreductase family. FAD is required as a cofactor.

It catalyses the reaction a D-alpha-amino acid + A + H2O = a 2-oxocarboxylate + AH2 + NH4(+). It participates in amino-acid degradation; D-alanine degradation; NH(3) and pyruvate from D-alanine: step 1/1. Its function is as follows. Oxidative deamination of D-amino acids. The polypeptide is D-amino acid dehydrogenase (Acinetobacter baumannii (strain SDF)).